The sequence spans 362 residues: Notoamide biosynthesis cluster protein J' (362 aa).

The first 22 residues, 1–22 (MRNMATMLHLLTLILLTSPAST), serve as a signal peptide directing secretion. Asn-157, Asn-190, Asn-280, and Asn-338 each carry an N-linked (GlcNAc...) asparagine glycan.

Its function is as follows. Part of the gene cluster that mediates the biosynthesis of notoamide, a fungal indole alkaloid that belongs to a family of natural products containing a characteristic bicyclo[2.2.2]diazaoctane core. The first step of notoamide biosynthesis involves coupling of L-proline and L-tryptophan by the bimodular NRPS notE', to produce cyclo-L-tryptophan-L-proline called brevianamide F. The reverse prenyltransferase notF' then acts as a deoxybrevianamide E synthase and converts brevianamide F to deoxybrevianamide E via reverse prenylation at C-2 of the indole ring leading to the bicyclo[2.2.2]diazaoctane core. Deoxybrevianamide E is further hydroxylated at C-6 of the indole ring, likely catalyzed by the cytochrome P450 monooxygenase notG', to yield 6-hydroxy-deoxybrevianamide E. 6-hydroxy-deoxybrevianamide E is a specific substrate of the prenyltransferase notC' for normal prenylation at C-7 to produce 6-hydroxy-7-prenyl-deoxybrevianamide, also called notoamide S. As the proposed pivotal branching point in notoamide biosynthesis, notoamide S can be diverted to notoamide E through an oxidative pyran ring closure putatively catalyzed by either notH' cytochrome P450 monooxygenase or the notD' FAD-linked oxidoreductase. This step would be followed by an indole 2,3-epoxidation-initiated pinacol-like rearrangement catalyzed by the notB' FAD-dependent monooxygenase leading to the formation of notoamide C and notoamide D. On the other hand notoamide S is converted to notoamide T by notH' (or notD'), a bifunctional oxidase that also functions as the intramolecular Diels-Alderase responsible for generation of (-)-notoamide T. To generate antipodal (+)-notoaminide T, notH (or notD) in Aspergillus strain MF297-2 is expected to catalyze a Diels-Alder reaction leading to the opposite stereochemistry. The remaining oxidoreductase notD' (or notH') likely catalyzes the oxidative pyran ring formation to yield (-)-stephacidin A. The FAD-dependent monooxygenase notI' is highly similar to notB' and is predicted to catalyze a similar conversion from (-)-stephacidin A to (+)-notoamide B via the 2,3-epoxidation of (-)-stephacidin A followed by a pinacol-type rearrangement. Finally, it remains unclear which enzyme could be responsible for the final hydroxylation steps leading to notoamide A and sclerotiamide. The function of notJ' in the notoamide biosynthesis has not been determined yet. The sequence is that of Notoamide biosynthesis cluster protein J' from Aspergillus versicolor.